The primary structure comprises 379 residues: UDP-N-acetylglucosamine--N-acetylmuramyl-(pentapeptide) pyrophosphoryl-undecaprenol N-acetylglucosamine transferase (379 aa).

UDP-N-acetyl-alpha-D-glucosamine is bound by residues 17 to 19 (TGG), Asn128, Arg169, Ser197, and Gln298.

Belongs to the glycosyltransferase 28 family. MurG subfamily.

The protein localises to the cell inner membrane. It carries out the reaction di-trans,octa-cis-undecaprenyl diphospho-N-acetyl-alpha-D-muramoyl-L-alanyl-D-glutamyl-meso-2,6-diaminopimeloyl-D-alanyl-D-alanine + UDP-N-acetyl-alpha-D-glucosamine = di-trans,octa-cis-undecaprenyl diphospho-[N-acetyl-alpha-D-glucosaminyl-(1-&gt;4)]-N-acetyl-alpha-D-muramoyl-L-alanyl-D-glutamyl-meso-2,6-diaminopimeloyl-D-alanyl-D-alanine + UDP + H(+). The protein operates within cell wall biogenesis; peptidoglycan biosynthesis. In terms of biological role, cell wall formation. Catalyzes the transfer of a GlcNAc subunit on undecaprenyl-pyrophosphoryl-MurNAc-pentapeptide (lipid intermediate I) to form undecaprenyl-pyrophosphoryl-MurNAc-(pentapeptide)GlcNAc (lipid intermediate II). The chain is UDP-N-acetylglucosamine--N-acetylmuramyl-(pentapeptide) pyrophosphoryl-undecaprenol N-acetylglucosamine transferase from Brucella melitensis biotype 2 (strain ATCC 23457).